The primary structure comprises 300 residues: Bifunctional protein FolD (300 aa).

NADP(+) is bound by residues 168 to 170 (GRS), Ser-193, and Ile-234.

It belongs to the tetrahydrofolate dehydrogenase/cyclohydrolase family. Homodimer.

It catalyses the reaction (6R)-5,10-methylene-5,6,7,8-tetrahydrofolate + NADP(+) = (6R)-5,10-methenyltetrahydrofolate + NADPH. The enzyme catalyses (6R)-5,10-methenyltetrahydrofolate + H2O = (6R)-10-formyltetrahydrofolate + H(+). The protein operates within one-carbon metabolism; tetrahydrofolate interconversion. In terms of biological role, catalyzes the oxidation of 5,10-methylenetetrahydrofolate to 5,10-methenyltetrahydrofolate and then the hydrolysis of 5,10-methenyltetrahydrofolate to 10-formyltetrahydrofolate. This chain is Bifunctional protein FolD, found in Ehrlichia canis (strain Jake).